Consider the following 516-residue polypeptide: D-alanine--D-alanyl carrier protein ligase (516 aa).

156-157 (TS) serves as a coordination point for ATP. Position 203 (aspartate 203) interacts with D-alanine. 298-303 (NAYGPT) contributes to the ATP binding site. Valine 307 is a D-alanine binding site. ATP-binding positions include aspartate 389, 401 to 404 (YGGR), and lysine 503. Lysine 503 contacts D-alanine.

It belongs to the ATP-dependent AMP-binding enzyme family. DltA subfamily.

It localises to the cytoplasm. The catalysed reaction is holo-[D-alanyl-carrier protein] + D-alanine + ATP = D-alanyl-[D-alanyl-carrier protein] + AMP + diphosphate. Its pathway is cell wall biogenesis; lipoteichoic acid biosynthesis. Catalyzes the first step in the D-alanylation of lipoteichoic acid (LTA), the activation of D-alanine and its transfer onto the D-alanyl carrier protein (Dcp) DltC. In an ATP-dependent two-step reaction, forms a high energy D-alanyl-AMP intermediate, followed by transfer of the D-alanyl residue as a thiol ester to the phosphopantheinyl prosthetic group of the Dcp. D-alanylation of LTA plays an important role in modulating the properties of the cell wall in Gram-positive bacteria, influencing the net charge of the cell wall. This Streptococcus pneumoniae (strain 70585) protein is D-alanine--D-alanyl carrier protein ligase.